The chain runs to 431 residues: UDP-N-acetylglucosamine 1-carboxyvinyltransferase (431 aa).

Position 22 to 23 (22 to 23 (KN)) interacts with phosphoenolpyruvate. R102 provides a ligand contact to UDP-N-acetyl-alpha-D-glucosamine. C126 (proton donor) is an active-site residue. C126 bears the 2-(S-cysteinyl)pyruvic acid O-phosphothioketal mark. UDP-N-acetyl-alpha-D-glucosamine contacts are provided by D318 and I340.

It belongs to the EPSP synthase family. MurA subfamily.

The protein localises to the cytoplasm. It carries out the reaction phosphoenolpyruvate + UDP-N-acetyl-alpha-D-glucosamine = UDP-N-acetyl-3-O-(1-carboxyvinyl)-alpha-D-glucosamine + phosphate. It participates in cell wall biogenesis; peptidoglycan biosynthesis. Its function is as follows. Cell wall formation. Adds enolpyruvyl to UDP-N-acetylglucosamine. The sequence is that of UDP-N-acetylglucosamine 1-carboxyvinyltransferase from Bartonella quintana (strain Toulouse) (Rochalimaea quintana).